Consider the following 160-residue polypeptide: Calcium-binding protein CP1 (160 aa).

3 consecutive EF-hand domains span residues 22 to 49 (AFEI…IPSG), 52 to 87 (NDET…TPFS), and 93 to 128 (GDDG…AGLA). Residues Asp27, Asp29, Asp31, Lys33, Asp38, Asp65, Asn67, Asp69, Glu76, Asp106, Asp108, Asp110, Arg112, and Asp117 each coordinate Ca(2+).

As to expression, expressed in roots and flowers.

Its subcellular location is the cytoplasm. It is found in the cytosol. Its function is as follows. Binds calcium in vitro. The chain is Calcium-binding protein CP1 from Arabidopsis thaliana (Mouse-ear cress).